A 139-amino-acid polypeptide reads, in one-letter code: Large-conductance mechanosensitive channel (139 aa).

2 consecutive transmembrane segments (helical) span residues 16 to 36 (VIDL…VDSL) and 83 to 103 (GQFI…FVAV).

Belongs to the MscL family. As to quaternary structure, homopentamer.

Its subcellular location is the cell inner membrane. Channel that opens in response to stretch forces in the membrane lipid bilayer. May participate in the regulation of osmotic pressure changes within the cell. The sequence is that of Large-conductance mechanosensitive channel from Aromatoleum aromaticum (strain DSM 19018 / LMG 30748 / EbN1) (Azoarcus sp. (strain EbN1)).